Reading from the N-terminus, the 638-residue chain is Threonine--tRNA ligase (638 aa).

Residues 1 to 61 (MPDIKLPDGS…EQNADLAIIT (61 aa)) enclose the TGS domain. The tract at residues 242–533 (DHRRLGKQYD…LIENFAGALP (292 aa)) is catalytic. Residues Cys333, His384, and His510 each coordinate Zn(2+).

This sequence belongs to the class-II aminoacyl-tRNA synthetase family. As to quaternary structure, homodimer. Zn(2+) serves as cofactor.

It localises to the cytoplasm. The enzyme catalyses tRNA(Thr) + L-threonine + ATP = L-threonyl-tRNA(Thr) + AMP + diphosphate + H(+). Functionally, catalyzes the attachment of threonine to tRNA(Thr) in a two-step reaction: L-threonine is first activated by ATP to form Thr-AMP and then transferred to the acceptor end of tRNA(Thr). Also edits incorrectly charged L-seryl-tRNA(Thr). This is Threonine--tRNA ligase from Dechloromonas aromatica (strain RCB).